A 254-amino-acid chain; its full sequence is Aspartate/glutamate leucyltransferase (254 aa).

Belongs to the R-transferase family. Bpt subfamily.

It localises to the cytoplasm. The enzyme catalyses N-terminal L-glutamyl-[protein] + L-leucyl-tRNA(Leu) = N-terminal L-leucyl-L-glutamyl-[protein] + tRNA(Leu) + H(+). It carries out the reaction N-terminal L-aspartyl-[protein] + L-leucyl-tRNA(Leu) = N-terminal L-leucyl-L-aspartyl-[protein] + tRNA(Leu) + H(+). Its function is as follows. Functions in the N-end rule pathway of protein degradation where it conjugates Leu from its aminoacyl-tRNA to the N-termini of proteins containing an N-terminal aspartate or glutamate. In Xylella fastidiosa (strain 9a5c), this protein is Aspartate/glutamate leucyltransferase.